Here is an 853-residue protein sequence, read N- to C-terminus: E3 ubiquitin-protein ligase RNF216 (853 aa).

3 disordered regions span residues 33 to 102 (TISD…DDIV), 125 to 152 (PLEVQNQSSEDSETELLSNPGEPAASVD), and 165 to 228 (PYFQ…AHPL). Over residues 53 to 73 (QQEDDLDDDVILTEDDSEDEY) the composition is skewed to acidic residues. Residue lysine 89 forms a Glycyl lysine isopeptide (Lys-Gly) (interchain with G-Cter in SUMO2) linkage. Residues lysine 339 and lysine 342 each participate in a glycyl lysine isopeptide (Lys-Gly) (interchain with G-Cter in SUMO2) cross-link. Serine 407 is modified (phosphoserine). Glycyl lysine isopeptide (Lys-Gly) (interchain with G-Cter in SUMO2) cross-links involve residues lysine 413, lysine 418, lysine 436, lysine 447, and lysine 473. Residues 463–479 (VKQEQEFYEQKIKEMAE) are a coiled coil. Positions 499–716 (QLIECRCCYG…SPGAPCQECS (218 aa)) are TRIAD supradomain. Zn(2+)-binding residues include cysteine 503, cysteine 506, cysteine 525, cysteine 528, cysteine 593, and cysteine 596. The RING-type 1 zinc finger occupies 503–552 (CRCCYGEFPFEELTQCADAHLFCKECLIRYAQEAVFGSGKSELSCMEGSC). An IBR-type zinc finger spans residues 571–636 (YKYYERKAEE…LWKEHNGLTC (66 aa)). Lysine 607 participates in a covalent cross-link: Glycyl lysine isopeptide (Lys-Gly) (interchain with G-Cter in SUMO2). Zn(2+) contacts are provided by cysteine 611, cysteine 616, cysteine 621, cysteine 624, histidine 631, and cysteine 636. Glycyl lysine isopeptide (Lys-Gly) (interchain with G-Cter in SUMO2) cross-links involve residues lysine 646 and lysine 654. Zn(2+)-binding residues include cysteine 663 and cysteine 666. The RING-type 2; atypical zinc-finger motif lies at 663–691 (CHKCGTGLIKSEGCNRMSCRCGAQMCYLC). Cysteine 676 is an active-site residue. Residues cysteine 681, cysteine 683, cysteine 688, cysteine 691, histidine 704, and cysteine 712 each coordinate Zn(2+). Residues 725–751 (TEDDEKLIEEIQKEAEEEQKRKNGENT) adopt a coiled-coil conformation. Glycyl lysine isopeptide (Lys-Gly) (interchain with G-Cter in SUMO2) cross-links involve residues lysine 753 and lysine 761.

Interacts with UBE2L3 and to some extent with UBE2L6. Interacts with TRAF3, TLR3, TLR4, TLR5 and TLR9. Isoform 3/ZIN binds RIPK1. In terms of processing, auto-ubiquitinated. Post-translationally, phosphorylation at Ser-719 enhances acceptor ubiquitin binding and chain-type specificity towards 'Lys-63' di-ubiquitin but not di-ubiquitin with other linkage types.

Its subcellular location is the cytoplasm. It localises to the cytoplasmic vesicle. The protein localises to the clathrin-coated vesicle. The catalysed reaction is S-ubiquitinyl-[E2 ubiquitin-conjugating enzyme]-L-cysteine + [acceptor protein]-L-lysine = [E2 ubiquitin-conjugating enzyme]-L-cysteine + N(6)-ubiquitinyl-[acceptor protein]-L-lysine.. Its pathway is protein modification; protein ubiquitination. Its activity is regulated as follows. Allosterically activated by 'Lys-63'-linked di-ubiquitin. E3 ubiquitin ligase which accepts ubiquitin from specific E2 ubiquitin-conjugating enzymes, and then transfers it to substrates promoting their ubiquitination. Plays a role in the regulation of antiviral responses by promoting the degradation of TRAF3, TLR4 and TLR9. In turn, down-regulates NF-kappa-B and IRF3 activation as well as beta interferon production. Also participates in the regulation of autophagy by ubiquitinating BECN1 leading to its degradation and autophagy inhibition. Plays a role in ARC-dependent synaptic plasticity by mediating ARC ubiquitination resulting in its rapid proteasomal degradation. Plays aso an essential role in spermatogenesis and male fertility. Mechanistically, regulates meiosis by promoting the degradation of PRKACB through the ubiquitin-mediated lysosome pathway. Modulates the gonadotropin-releasing hormone signal pathway by affecting the stability of STAU2 that is required for the microtubule-dependent transport of neuronal RNA from the cell body to the dendrite. This Mus musculus (Mouse) protein is E3 ubiquitin-protein ligase RNF216 (Rnf216).